Reading from the N-terminus, the 443-residue chain is Thymidine phosphorylase (443 aa).

It belongs to the thymidine/pyrimidine-nucleoside phosphorylase family. As to quaternary structure, homodimer.

It catalyses the reaction thymidine + phosphate = 2-deoxy-alpha-D-ribose 1-phosphate + thymine. It participates in pyrimidine metabolism; dTMP biosynthesis via salvage pathway; dTMP from thymine: step 1/2. The enzymes which catalyze the reversible phosphorolysis of pyrimidine nucleosides are involved in the degradation of these compounds and in their utilization as carbon and energy sources, or in the rescue of pyrimidine bases for nucleotide synthesis. This is Thymidine phosphorylase from Shewanella baltica (strain OS155 / ATCC BAA-1091).